The following is a 326-amino-acid chain: Flap endonuclease 1 (326 aa).

An N-domain region spans residues 1–100 (MGNADLRSLA…DEVEKRREQR (100 aa)). D28, D82, E154, E156, D175, D177, and D225 together coordinate Mg(2+). The tract at residues 118–246 (RVAKLDSRTQ…TAVKDLHEHG (129 aa)) is I-domain. The interaction with PCNA stretch occupies residues 318–326 (VQTGLDRWA).

This sequence belongs to the XPG/RAD2 endonuclease family. FEN1 subfamily. In terms of assembly, interacts with PCNA. PCNA stimulates the nuclease activity without altering cleavage specificity. Mg(2+) is required as a cofactor.

Structure-specific nuclease with 5'-flap endonuclease and 5'-3' exonuclease activities involved in DNA replication and repair. During DNA replication, cleaves the 5'-overhanging flap structure that is generated by displacement synthesis when DNA polymerase encounters the 5'-end of a downstream Okazaki fragment. Binds the unpaired 3'-DNA end and kinks the DNA to facilitate 5' cleavage specificity. Cleaves one nucleotide into the double-stranded DNA from the junction in flap DNA, leaving a nick for ligation. Also involved in the base excision repair (BER) pathway. Acts as a genome stabilization factor that prevents flaps from equilibrating into structures that lead to duplications and deletions. Also possesses 5'-3' exonuclease activity on nicked or gapped double-stranded DNA. The polypeptide is Flap endonuclease 1 (Haloarcula marismortui (strain ATCC 43049 / DSM 3752 / JCM 8966 / VKM B-1809) (Halobacterium marismortui)).